The sequence spans 317 residues: Porphobilinogen deaminase (317 aa).

Cysteine 245 carries the S-(dipyrrolylmethanemethyl)cysteine modification.

It belongs to the HMBS family. Monomer. Dipyrromethane is required as a cofactor.

It catalyses the reaction 4 porphobilinogen + H2O = hydroxymethylbilane + 4 NH4(+). The protein operates within porphyrin-containing compound metabolism; protoporphyrin-IX biosynthesis; coproporphyrinogen-III from 5-aminolevulinate: step 2/4. It functions in the pathway porphyrin-containing compound metabolism; chlorophyll biosynthesis. Its function is as follows. Tetrapolymerization of the monopyrrole PBG into the hydroxymethylbilane pre-uroporphyrinogen in several discrete steps. This is Porphobilinogen deaminase from Prochlorococcus marinus (strain MIT 9303).